A 358-amino-acid polypeptide reads, in one-letter code: Neutral protease 2 homolog MGYG_02351 (358 aa).

Positions 1–17 (MQFVALLAALGAPLALA) are cleaved as a signal peptide. A propeptide spanning residues 18–183 (ASIPAAHNNS…DSPAGVIDKR (166 aa)) is cleaved from the precursor. Intrachain disulfides connect C191-C260 and C267-C285. Zn(2+) is bound at residue H309. E310 is a catalytic residue. 2 residues coordinate Zn(2+): H313 and D324.

Belongs to the peptidase M35 family. Zn(2+) serves as cofactor.

It is found in the secreted. It carries out the reaction Preferential cleavage of bonds with hydrophobic residues in P1'. Also 3-Asn-|-Gln-4 and 8-Gly-|-Ser-9 bonds in insulin B chain.. Its function is as follows. Secreted metalloproteinase that allows assimilation of proteinaceous substrates. Shows high activities on basic nuclear substrates such as histone and protamine. May be involved in virulence. This Arthroderma gypseum (strain ATCC MYA-4604 / CBS 118893) (Microsporum gypseum) protein is Neutral protease 2 homolog MGYG_02351.